A 629-amino-acid chain; its full sequence is tRNA uridine 5-carboxymethylaminomethyl modification enzyme MnmG (629 aa).

FAD-binding positions include 14–19, valine 126, and serine 181; that span reads GAGHAG. Residue 273-287 participates in NAD(+) binding; sequence GPRYCPSIEDKVVRF. Glutamine 370 is a binding site for FAD.

It belongs to the MnmG family. Homodimer. Heterotetramer of two MnmE and two MnmG subunits. It depends on FAD as a cofactor.

It is found in the cytoplasm. Its function is as follows. NAD-binding protein involved in the addition of a carboxymethylaminomethyl (cmnm) group at the wobble position (U34) of certain tRNAs, forming tRNA-cmnm(5)s(2)U34. This Bacillus cereus (strain ZK / E33L) protein is tRNA uridine 5-carboxymethylaminomethyl modification enzyme MnmG.